The sequence spans 297 residues: Probable porphobilinogen deaminase (297 aa).

S-(dipyrrolylmethanemethyl)cysteine is present on C241.

Belongs to the HMBS family. Requires dipyrromethane as cofactor.

The catalysed reaction is 4 porphobilinogen + H2O = hydroxymethylbilane + 4 NH4(+). It participates in porphyrin-containing compound metabolism; protoporphyrin-IX biosynthesis; coproporphyrinogen-III from 5-aminolevulinate: step 2/4. Tetrapolymerization of the monopyrrole PBG into the hydroxymethylbilane pre-uroporphyrinogen in several discrete steps. This Pyrobaculum arsenaticum (strain DSM 13514 / JCM 11321 / PZ6) protein is Probable porphobilinogen deaminase.